The following is a 293-amino-acid chain: Notch homolog 2 N-terminal-like protein C (293 aa).

4 consecutive EGF-like domains span residues 42-81 (PPRM…EYCQ), 82-120 (HRDP…EDCQ), 123-161 (TSHP…KECQ), and 162-198 (WTDA…QKCE). Disulfide bonds link Cys46–Cys59, Cys53–Cys69, Cys71–Cys80, Cys86–Cys97, Cys91–Cys108, Cys110–Cys119, Cys127–Cys139, Cys133–Cys149, Cys151–Cys160, Cys166–Cys177, Cys171–Cys186, Cys188–Cys197, Cys204–Cys216, Cys210–Cys225, Cys227–Cys236, Cys243–Cys254, and Cys248–Cys264. Asn64 carries an N-linked (GlcNAc...) asparagine glycan. The N-linked (GlcNAc...) asparagine glycan is linked to Asn173. In terms of domain architecture, EGF-like 5; calcium-binding spans 200-237 (DVNECDIPGHCQHGGTCLNLPGSYQCQCLQGFTGQYCD). One can recognise an EGF-like 6 domain in the interval 239–276 (LYVPCAPSPCVNGGTCRQTGDFTFECNCLPETVRRGTE).

This sequence belongs to the NOTCH family. As to quaternary structure, interacts with NOTCH2. Interacts with DLL1; the interaction is direct. As to expression, expressed in radial glia neural stem cells during cortical development.

The protein localises to the secreted. Human-specific protein that promotes neural progenitor proliferation and evolutionary expansion of the brain neocortex by regulating the Notch signaling pathway. Able to promote neural progenitor self-renewal, possibly by down-regulating neuronal differentiation genes, thereby delaying the differentiation of neuronal progenitors and leading to an overall final increase in neuronal production. Acts by enhancing the Notch signaling pathway via two different mechanisms that probably work in parallel to reach the same effect. Enhances Notch signaling pathway in a non-cell-autonomous manner via direct interaction with NOTCH2. Also promotes Notch signaling pathway in a cell-autonomous manner through inhibition of cis DLL1-NOTCH2 interactions, which promotes neuronal differentiation. The chain is Notch homolog 2 N-terminal-like protein C from Homo sapiens (Human).